A 285-amino-acid chain; its full sequence is Bifunctional protein FolD (285 aa).

NADP(+) is bound by residues 165-167 (GRS) and serine 190.

It belongs to the tetrahydrofolate dehydrogenase/cyclohydrolase family. Homodimer.

The enzyme catalyses (6R)-5,10-methylene-5,6,7,8-tetrahydrofolate + NADP(+) = (6R)-5,10-methenyltetrahydrofolate + NADPH. It carries out the reaction (6R)-5,10-methenyltetrahydrofolate + H2O = (6R)-10-formyltetrahydrofolate + H(+). It functions in the pathway one-carbon metabolism; tetrahydrofolate interconversion. Functionally, catalyzes the oxidation of 5,10-methylenetetrahydrofolate to 5,10-methenyltetrahydrofolate and then the hydrolysis of 5,10-methenyltetrahydrofolate to 10-formyltetrahydrofolate. The polypeptide is Bifunctional protein FolD (Burkholderia cenocepacia (strain HI2424)).